Here is a 417-residue protein sequence, read N- to C-terminus: NADH-quinone oxidoreductase subunit D (417 aa).

This sequence belongs to the complex I 49 kDa subunit family. In terms of assembly, NDH-1 is composed of 14 different subunits. Subunits NuoB, C, D, E, F, and G constitute the peripheral sector of the complex.

It is found in the cell inner membrane. The enzyme catalyses a quinone + NADH + 5 H(+)(in) = a quinol + NAD(+) + 4 H(+)(out). NDH-1 shuttles electrons from NADH, via FMN and iron-sulfur (Fe-S) centers, to quinones in the respiratory chain. The immediate electron acceptor for the enzyme in this species is believed to be ubiquinone. Couples the redox reaction to proton translocation (for every two electrons transferred, four hydrogen ions are translocated across the cytoplasmic membrane), and thus conserves the redox energy in a proton gradient. The sequence is that of NADH-quinone oxidoreductase subunit D from Acidovorax sp. (strain JS42).